Reading from the N-terminus, the 155-residue chain is Small ribosomal subunit protein uS7 (155 aa).

The protein belongs to the universal ribosomal protein uS7 family. In terms of assembly, part of the 30S ribosomal subunit. Contacts proteins S9 and S11.

Its function is as follows. One of the primary rRNA binding proteins, it binds directly to 16S rRNA where it nucleates assembly of the head domain of the 30S subunit. Is located at the subunit interface close to the decoding center, probably blocks exit of the E-site tRNA. The polypeptide is Small ribosomal subunit protein uS7 (Xylella fastidiosa (strain M23)).